The primary structure comprises 29 residues: Snake venom metalloproteinase bothrolysin (29 aa).

A Peptidase M12B domain is found at 6 to 29 (RYIELFLVVDSGMFMKYNGNSDKI). Glu9 is a binding site for Ca(2+).

This sequence belongs to the venom metalloproteinase (M12B) family. The cofactor is Zn(2+). Expressed by the venom gland.

The protein resides in the secreted. It catalyses the reaction Cleavage of 4-Gln-|-His-5, 9-Ser-|-His-10 and 14-Ala-|-Leu-15 of insulin B chain and Pro-|-Phe of angiotensin I.. Snake venom zinc metalloproteinase that impairs hemostasis in the envenomed animal. This Bothrops jararaca (Jararaca) protein is Snake venom metalloproteinase bothrolysin.